A 413-amino-acid polypeptide reads, in one-letter code: Glycosyl hydrolase family 109 protein 2 (413 aa).

Residues 26–27 (NR), D48, 96–99 (WLTH), 116–117 (EV), and N145 contribute to the NAD(+) site. A substrate-binding site is contributed by Y174. Residues 191-195 (YHNHW) and Y208 each bind NAD(+). Residues 208–211 (YPTH) and Y290 contribute to the substrate site.

Belongs to the Gfo/Idh/MocA family. Glycosyl hydrolase 109 subfamily. NAD(+) serves as cofactor.

In terms of biological role, glycosidase. The sequence is that of Glycosyl hydrolase family 109 protein 2 from Phocaeicola vulgatus (strain ATCC 8482 / DSM 1447 / JCM 5826 / CCUG 4940 / NBRC 14291 / NCTC 11154) (Bacteroides vulgatus).